Consider the following 160-residue polypeptide: Large ribosomal subunit protein bL17 (160 aa).

Residues 128–160 (KKATKTRRSRKRKSADVVVEAAPAEETPKAAEE) are disordered. The segment covering 129–140 (KATKTRRSRKRK) has biased composition (basic residues).

This sequence belongs to the bacterial ribosomal protein bL17 family. Part of the 50S ribosomal subunit. Contacts protein L32.

This Porphyromonas gingivalis (strain ATCC 33277 / DSM 20709 / CIP 103683 / JCM 12257 / NCTC 11834 / 2561) protein is Large ribosomal subunit protein bL17.